A 434-amino-acid polypeptide reads, in one-letter code: Chaperone SurA (434 aa).

Positions 1-22 (MKKWKSSLLGIAIWSLAASSMA) are cleaved as a signal peptide. 2 PpiC domains span residues 173–274 (TVQF…KVND) and 283–383 (VTEV…EVLD).

Its subcellular location is the periplasm. The catalysed reaction is [protein]-peptidylproline (omega=180) = [protein]-peptidylproline (omega=0). Its function is as follows. Chaperone involved in the correct folding and assembly of outer membrane proteins. Recognizes specific patterns of aromatic residues and the orientation of their side chains, which are found more frequently in integral outer membrane proteins. May act in both early periplasmic and late outer membrane-associated steps of protein maturation. The chain is Chaperone SurA from Photobacterium profundum (strain SS9).